A 171-amino-acid chain; its full sequence is 3-hydroxydecanoyl-[acyl-carrier-protein] dehydratase (171 aa).

H71 is a catalytic residue.

The protein belongs to the thioester dehydratase family. FabA subfamily. As to quaternary structure, homodimer.

It localises to the cytoplasm. It catalyses the reaction a (3R)-hydroxyacyl-[ACP] = a (2E)-enoyl-[ACP] + H2O. It carries out the reaction (3R)-hydroxydecanoyl-[ACP] = (2E)-decenoyl-[ACP] + H2O. The catalysed reaction is (2E)-decenoyl-[ACP] = (3Z)-decenoyl-[ACP]. It participates in lipid metabolism; fatty acid biosynthesis. Functionally, necessary for the introduction of cis unsaturation into fatty acids. Catalyzes the dehydration of (3R)-3-hydroxydecanoyl-ACP to E-(2)-decenoyl-ACP and then its isomerization to Z-(3)-decenoyl-ACP. Can catalyze the dehydratase reaction for beta-hydroxyacyl-ACPs with saturated chain lengths up to 16:0, being most active on intermediate chain length. This Hamiltonella defensa subsp. Acyrthosiphon pisum (strain 5AT) protein is 3-hydroxydecanoyl-[acyl-carrier-protein] dehydratase.